Reading from the N-terminus, the 210-residue chain is Na(+)-translocating NADH-quinone reductase subunit D (210 aa).

6 consecutive transmembrane segments (helical) span residues 10-30 (VLIG…GVCS), 42-62 (LVMT…ISLI), 72-92 (IIVQ…VLQA), 103-123 (VFVG…AYAM), 131-151 (FMDG…VGFV), and 178-198 (NGLL…IWII).

It belongs to the NqrDE/RnfAE family. In terms of assembly, composed of six subunits; NqrA, NqrB, NqrC, NqrD, NqrE and NqrF.

It localises to the cell inner membrane. It catalyses the reaction a ubiquinone + n Na(+)(in) + NADH + H(+) = a ubiquinol + n Na(+)(out) + NAD(+). NQR complex catalyzes the reduction of ubiquinone-1 to ubiquinol by two successive reactions, coupled with the transport of Na(+) ions from the cytoplasm to the periplasm. NqrA to NqrE are probably involved in the second step, the conversion of ubisemiquinone to ubiquinol. This Shewanella pealeana (strain ATCC 700345 / ANG-SQ1) protein is Na(+)-translocating NADH-quinone reductase subunit D.